We begin with the raw amino-acid sequence, 232 residues long: Large ribosomal subunit protein uL1 (232 aa).

Belongs to the universal ribosomal protein uL1 family. Part of the 50S ribosomal subunit.

Its function is as follows. Binds directly to 23S rRNA. The L1 stalk is quite mobile in the ribosome, and is involved in E site tRNA release. Protein L1 is also a translational repressor protein, it controls the translation of the L11 operon by binding to its mRNA. The chain is Large ribosomal subunit protein uL1 from Phocaeicola vulgatus (strain ATCC 8482 / DSM 1447 / JCM 5826 / CCUG 4940 / NBRC 14291 / NCTC 11154) (Bacteroides vulgatus).